The sequence spans 100 residues: NADH-quinone oxidoreductase subunit K (100 aa).

The next 3 helical transmembrane spans lie at 4–24, 28–48, and 60–80; these read LQHG…GLVI, LLFM…AFVV, and IMYI…LALL.

The protein belongs to the complex I subunit 4L family. As to quaternary structure, NDH-1 is composed of 13 different subunits. Subunits NuoA, H, J, K, L, M, N constitute the membrane sector of the complex.

It is found in the cell inner membrane. The catalysed reaction is a quinone + NADH + 5 H(+)(in) = a quinol + NAD(+) + 4 H(+)(out). NDH-1 shuttles electrons from NADH, via FMN and iron-sulfur (Fe-S) centers, to quinones in the respiratory chain. The immediate electron acceptor for the enzyme in this species is believed to be ubiquinone. Couples the redox reaction to proton translocation (for every two electrons transferred, four hydrogen ions are translocated across the cytoplasmic membrane), and thus conserves the redox energy in a proton gradient. The sequence is that of NADH-quinone oxidoreductase subunit K from Cronobacter sakazakii (strain ATCC BAA-894) (Enterobacter sakazakii).